The chain runs to 326 residues: Acetyl-coenzyme A carboxylase carboxyl transferase subunit alpha (326 aa).

In terms of domain architecture, CoA carboxyltransferase C-terminal spans 44–298 (QLESRAEQLR…KEALLFHLNT (255 aa)).

This sequence belongs to the AccA family. Acetyl-CoA carboxylase is a heterohexamer composed of biotin carboxyl carrier protein (AccB), biotin carboxylase (AccC) and two subunits each of ACCase subunit alpha (AccA) and ACCase subunit beta (AccD).

It localises to the cytoplasm. It catalyses the reaction N(6)-carboxybiotinyl-L-lysyl-[protein] + acetyl-CoA = N(6)-biotinyl-L-lysyl-[protein] + malonyl-CoA. The protein operates within lipid metabolism; malonyl-CoA biosynthesis; malonyl-CoA from acetyl-CoA: step 1/1. Functionally, component of the acetyl coenzyme A carboxylase (ACC) complex. First, biotin carboxylase catalyzes the carboxylation of biotin on its carrier protein (BCCP) and then the CO(2) group is transferred by the carboxyltransferase to acetyl-CoA to form malonyl-CoA. This is Acetyl-coenzyme A carboxylase carboxyl transferase subunit alpha from Synechocystis sp. (strain ATCC 27184 / PCC 6803 / Kazusa).